The chain runs to 187 residues: Threonylcarbamoyl-AMP synthase (187 aa).

The 184-residue stretch at 4 to 187 (TPDLDAAVAT…DARTGQILRD (184 aa)) folds into the YrdC-like domain.

This sequence belongs to the SUA5 family. TsaC subfamily.

It localises to the cytoplasm. It carries out the reaction L-threonine + hydrogencarbonate + ATP = L-threonylcarbamoyladenylate + diphosphate + H2O. Functionally, required for the formation of a threonylcarbamoyl group on adenosine at position 37 (t(6)A37) in tRNAs that read codons beginning with adenine. Catalyzes the conversion of L-threonine, HCO(3)(-)/CO(2) and ATP to give threonylcarbamoyl-AMP (TC-AMP) as the acyladenylate intermediate, with the release of diphosphate. The protein is Threonylcarbamoyl-AMP synthase of Xanthomonas campestris pv. campestris (strain 8004).